Here is a 724-residue protein sequence, read N- to C-terminus: 1,4-alpha-glucan branching enzyme GlgB 1 (724 aa).

The active-site Nucleophile is the Asp-403. Glu-456 functions as the Proton donor in the catalytic mechanism.

The protein belongs to the glycosyl hydrolase 13 family. GlgB subfamily. In terms of assembly, monomer.

It carries out the reaction Transfers a segment of a (1-&gt;4)-alpha-D-glucan chain to a primary hydroxy group in a similar glucan chain.. The protein operates within glycan biosynthesis; glycogen biosynthesis. In terms of biological role, catalyzes the formation of the alpha-1,6-glucosidic linkages in glycogen by scission of a 1,4-alpha-linked oligosaccharide from growing alpha-1,4-glucan chains and the subsequent attachment of the oligosaccharide to the alpha-1,6 position. The chain is 1,4-alpha-glucan branching enzyme GlgB 1 from Xanthomonas campestris pv. campestris (strain 8004).